Reading from the N-terminus, the 479-residue chain is GTPase Obg (479 aa).

The Obg domain maps to 2–159; the sequence is TTFVDRVELH…QDIVLELKTV (158 aa). Residues 61–87 are disordered; the sequence is HHKPHRSATNGKPGEGGNRSGKDGQDL. Positions 160-331 constitute an OBG-type G domain; the sequence is ADVALVGYPS…LSFALAELVG (172 aa). GTP contacts are provided by residues 166 to 173, 191 to 195, 212 to 215, 283 to 286, and 312 to 314; these read GYPSAGKS, FTTLV, DVPG, NKID, and SAV. Residues S173 and T193 each coordinate Mg(2+). Residues 349–431 enclose the OCT domain; that stretch reads PKAVDDAGFT…DNAVVFDWEP (83 aa). Over residues 440–453 the composition is skewed to basic and acidic residues; that stretch reads LGRRGEDHRLDEPR. The disordered stretch occupies residues 440 to 479; the sequence is LGRRGEDHRLDEPRPAAQRRRDKQAERDDAEKEYDDFEPF. A compositionally biased stretch (acidic residues) spans 470-479; that stretch reads EKEYDDFEPF.

The protein belongs to the TRAFAC class OBG-HflX-like GTPase superfamily. OBG GTPase family. Monomer. The cofactor is Mg(2+).

The protein resides in the cytoplasm. An essential GTPase which binds GTP, GDP and possibly (p)ppGpp with moderate affinity, with high nucleotide exchange rates and a fairly low GTP hydrolysis rate. Plays a role in control of the cell cycle, stress response, ribosome biogenesis and in those bacteria that undergo differentiation, in morphogenesis control. This chain is GTPase Obg, found in Streptomyces avermitilis (strain ATCC 31267 / DSM 46492 / JCM 5070 / NBRC 14893 / NCIMB 12804 / NRRL 8165 / MA-4680).